A 381-amino-acid polypeptide reads, in one-letter code: Dual specificity protein phosphatase 6 (381 aa).

In terms of domain architecture, Rhodanese spans 30 to 148 (GNEQLLLMDC…FQAEFALHCE (119 aa)). Residues 176 to 203 (SSSDIESDLDRDPNSATDSDGSPLSNSQ) form a disordered region. The segment covering 189–203 (NSATDSDGSPLSNSQ) has biased composition (polar residues). The 144-residue stretch at 206–349 (FPVEILPFLY…LLDFERTLGL (144 aa)) folds into the Tyrosine-protein phosphatase domain. The Phosphocysteine intermediate role is filled by Cys293.

It belongs to the protein-tyrosine phosphatase family. Non-receptor class dual specificity subfamily. As to quaternary structure, interacts with MAPK1/ERK2. Ubiquitinated by the SCF(FBXO31) complex, leading to its proteasomal degradation. As to expression, expressed in lung, heart, brain, and kidney, but not significantly in skeletal muscle or testis.

Its subcellular location is the cytoplasm. It carries out the reaction O-phospho-L-tyrosyl-[protein] + H2O = L-tyrosyl-[protein] + phosphate. It catalyses the reaction O-phospho-L-seryl-[protein] + H2O = L-seryl-[protein] + phosphate. The catalysed reaction is O-phospho-L-threonyl-[protein] + H2O = L-threonyl-[protein] + phosphate. In terms of biological role, dual specificity protein phosphatase, which mediates dephosphorylation and inactivation of MAP kinases. Has a specificity for the ERK family. Implicated in muscle and neuronal differentiation. Plays an important role in alleviating chronic postoperative pain. Necessary for the normal dephosphorylation of the long-lasting phosphorylated forms of spinal MAPK1/3 and MAP kinase p38 induced by peripheral surgery, which drives the resolution of acute postoperative allodynia. Also important for dephosphorylation of MAPK1/3 in local wound tissue, which further contributes to resolution of acute pain. The sequence is that of Dual specificity protein phosphatase 6 (Dusp6) from Rattus norvegicus (Rat).